A 1085-amino-acid chain; its full sequence is Extracellular calcium-sensing receptor (1085 aa).

A signal peptide spans 1–19 (MALYSCCWILLAFSTWCTS). The Extracellular portion of the chain corresponds to 20-611 (AYGPDQRAQK…KEIEFLSWTE (592 aa)). The tract at residues 23-189 (PDQRAQKKGD…QFKSFLRTIP (167 aa)) is ligand-binding 1 (LB1). A disulfide bridge connects residues Cys-61 and Cys-102. 67-71 (RGFRW) provides a ligand contact to phosphate. The Ca(2+) site is built by Ile-82, Ser-85, Leu-88, and Leu-89. Residue Asn-91 is glycosylated (N-linked (GlcNAc...) asparagine). Residue Thr-101 coordinates Ca(2+). A glycan (N-linked (GlcNAc...) asparagine) is linked at Asn-131. Thr-146 serves as a coordination point for Ca(2+). Residues Ser-148, Ala-169, and Ser-171 each contribute to the L-tryptophan site. Ca(2+) is bound by residues Ser-171, Pro-189, Asp-191, Glu-232, and Asp-235. The interval 190–325 (NDEHQATAMA…GGTIGFGLKA (136 aa)) is ligand-binding 2 (LB2). 7 disulfide bridges follow: Cys-237/Cys-562, Cys-359/Cys-396, Cys-438/Cys-450, Cys-543/Cys-563, Cys-547/Cys-566, Cys-569/Cys-583, and Cys-586/Cys-599. Residues Asp-239 and Ser-241 each coordinate spermine. 2 N-linked (GlcNAc...) asparagine glycosylation sites follow: Asn-262 and Asn-288. Glu-298 serves as a coordination point for Ca(2+). An L-tryptophan-binding site is contributed by Glu-298. Asn-401 is a glycosylation site (N-linked (GlcNAc...) asparagine). 416–418 (RIS) is a phosphate binding site. N-linked (GlcNAc...) asparagine glycosylation is found at Asn-447, Asn-469, and Asn-489. Residue Tyr-490 participates in Ca(2+) binding. An N-linked (GlcNAc...) asparagine glycan is attached at Asn-542. The tract at residues 543 to 613 (CSRDCLAGTR…IEFLSWTEPF (71 aa)) is cysteine-rich (CR). Gly-558 is a Ca(2+) binding site. Residue Asn-595 is glycosylated (N-linked (GlcNAc...) asparagine). The chain crosses the membrane as a helical span at residues 612 to 637 (PFGIALTLFAVLGIFLTAFVLGVFIK). The Cytoplasmic segment spans residues 638 to 649 (FRNTPIVKATNR). Residues 638-649 (FRNTPIVKATNR) are intracellular loop 1 (ICL1). Residues 650–669 (ELSYLLLFSLLCCFSSSLFF) traverse the membrane as a helical segment. Residues 670 to 675 (IGEPQD) lie on the Extracellular side of the membrane. Residues 676-699 (WTCRLRQPAFGISFVLCISCILVK) form a helical membrane-spanning segment. Topologically, residues 700–723 (TNRVLLVFEAKIPTSFHRKWWGLN) are cytoplasmic. An intracellular loop 2 (ICL2) region spans residues 700–723 (TNRVLLVFEAKIPTSFHRKWWGLN). Residues 724–746 (LQFLLVFLCTFMQIVICAIWLNT) form a helical membrane-spanning segment. At 747 to 770 (APPSSYRNHELEDEIIFITCHEGS) the chain is on the extracellular side. Residues 771–790 (LMALGFLIGYTCLLAAICFF) form a helical membrane-spanning segment. Topologically, residues 791–806 (FAFKSRKLPENFNEAK) are cytoplasmic. The segment at 791-806 (FAFKSRKLPENFNEAK) is intracellular loop 3 (ICL3). A helical transmembrane segment spans residues 807-829 (FITFSMLIFFIVWISFIPAYAST). Residues 830-833 (YGKF) are Extracellular-facing. Residues 834-855 (VSAVEVIAILAASFGLLACIFF) form a helical membrane-spanning segment. Over 856-1085 (NKVYIILFKP…STVTENMLRS (230 aa)) the chain is Cytoplasmic. Positions 856 to 1085 (NKVYIILFKP…STVTENMLRS (230 aa)) are C-terminus. Residues 881 to 901 (AFKVAARATLRRSNVSRQRSS) are interaction with RNF19A. Thr-889 bears the Phosphothreonine mark. The segment at 891–899 (RRSNVSRQR) is arginine-rich retention motif. 3 positions are modified to phosphoserine: Ser-893, Ser-900, and Ser-921. Positions 893 to 938 (SNVSRQRSSSLGGSTGSTPSSSISSKSNSEDPFPQQQPKRQKQPQP) are enriched in low complexity. Disordered stretches follow at residues 893 to 969 (SNVS…PPRC) and 1034 to 1058 (SQET…EEMS). The segment covering 950 to 960 (QPRPPSTPQPQ) has biased composition (pro residues). Residue Ser-1068 is modified to Phosphoserine.

Belongs to the G-protein coupled receptor 3 family. As to quaternary structure, homodimer; disulfide-linked. Interacts with VCP. Interacts with ARRB1. Phosphorylation at Thr-889 by PKC impairs coupling with G(q)/G(11) G-proteins, while it does not affect G(i)/G(o)-coupling. Phosphorylation at Ser-893 by PKC and Ser-900 by PKA promote plasma membrane localization. In terms of processing, ubiquitinated by RNF19A; which induces proteasomal degradation.

It localises to the cell membrane. With respect to regulation, in resting state, adopts an open conformation, anion-binding promoting the inactive configuration. Upon aromatic amino acid-binding, the groove in the extracellular venus flytrap module is closed, thereby inducing the formation of a novel homodimer interface between subunits. Calcium ions stabilize the active state by enhancing homodimer interactions between membrane-proximal domains to fully activate the receptor. Upon activation, the homodimer adopts an asymmetric configuration of the 7-transmembrane region that primes one protomer for G-protein coupling. G-protein binding expands the transmembrane dimer interface; the restriction imposed by the receptor dimer, in combination with intracellular loop 2 (ICL2), enables G-protein activation by facilitating conformational transition of G-protein alpha. Coupling to different classes of G-proteins results in distinct CASR-G-protein interfaces. G-protein-coupled receptor that senses changes in the extracellular concentration of calcium ions and plays a key role in maintaining calcium homeostasis. Senses fluctuations in the circulating calcium concentration: activated by elevated circulating calcium, leading to decreased parathyroid hormone (PTH) secretion in parathyroid glands. In kidneys, acts as a key regulator of renal tubular calcium resorption. Ligand binding causes a conformation change that triggers signaling via guanine nucleotide-binding proteins (G-proteins) and modulates the activity of downstream effectors. CASR is coupled with different G(q)/G(11), G(i)/G(o)- or G(s)-classes of G-proteins depending on the context. In the parathyroid and kidney, CASR signals through G(q)/G(11) and G(i)/G(o) G-proteins: G(q)/G(11) coupling activates phospholipase C-beta, releasing diacylglycerol (DAG) and inositol 1,4,5-trisphosphate (IP3) second messengers, while G(i)/G(o) coupling mediates inhibition of adenylate cyclase activity. The G-protein-coupled receptor activity is activated by a co-agonist mechanism: aromatic amino acids, such as Trp or Phe, act concertedly with divalent cations, such as calcium or magnesium, to achieve full receptor activation. Acts as an activator of the NLRP3 inflammasome via G(i)/G(o)-mediated signaling: down-regulation of cyclic AMP (cAMP) relieving NLRP3 inhibition by cAMP. Acts as a regulator of proton-sensing receptor GPR68 in a seesaw manner: CASR-mediated signaling inhibits GPR68 signaling in response to extracellular calcium, while GPR68 inhibits CASR in presence of extracellular protons. The chain is Extracellular calcium-sensing receptor (CASR) from Bos taurus (Bovine).